We begin with the raw amino-acid sequence, 579 residues long: GPI alpha-1,2-mannosyltransferase 4 (579 aa).

A run of 8 helical transmembrane segments spans residues 131–151 (LLLT…APPM), 156–173 (WNAL…VFYT), 180–200 (IEGL…TWGP), 216–236 (LGGI…FAVV), 258–278 (ALVL…TDSW), 369–389 (YLLL…HQEA), 391–411 (FLIP…QPVP), and 416–436 (VVLF…GGLV).

It belongs to the glycosyltransferase 22 family. PIGZ subfamily. As to expression, widely expressed at low level, with highest level in brain and colon.

The protein resides in the endoplasmic reticulum membrane. It participates in glycolipid biosynthesis; glycosylphosphatidylinositol-anchor biosynthesis. Functionally, alpha-1,2-mannosyltransferase that catalyzes the transfer of the fourth mannose, via an alpha-1,2 bond, from a dolichol-phosphate-mannose (Dol-P-Man) to an alpha-D-Man-(1-&gt;2)-alpha-D-Man-(1-&gt;6)-2-PEtn-alpha-D-Man-(1-&gt;4)-alpha-D-GlcN-(1-&gt;6)-(1-radyl,2-acyl-sn-glycero-3-phospho)-2-acyl-inositol (also termed H6) intermediate and participates in the twelfth step of the glycosylphosphatidylinositol-anchor biosynthesis. The presence of a fourth mannose in GPI is facultative, suggesting that it only exists in some tissues. The protein is GPI alpha-1,2-mannosyltransferase 4 of Homo sapiens (Human).